The chain runs to 196 residues: Xanthine phosphoribosyltransferase (196 aa).

Xanthine contacts are provided by Leu20 and Asn27. 128–132 (ATGAA) contacts 5-phospho-alpha-D-ribose 1-diphosphate. Residue Lys156 participates in xanthine binding.

The protein belongs to the purine/pyrimidine phosphoribosyltransferase family. Xpt subfamily. Homodimer.

It is found in the cytoplasm. The enzyme catalyses XMP + diphosphate = xanthine + 5-phospho-alpha-D-ribose 1-diphosphate. It participates in purine metabolism; XMP biosynthesis via salvage pathway; XMP from xanthine: step 1/1. In terms of biological role, converts the preformed base xanthine, a product of nucleic acid breakdown, to xanthosine 5'-monophosphate (XMP), so it can be reused for RNA or DNA synthesis. In Brevibacillus brevis (strain 47 / JCM 6285 / NBRC 100599), this protein is Xanthine phosphoribosyltransferase.